Reading from the N-terminus, the 276-residue chain is Undecaprenyl-diphosphatase 1 (276 aa).

5 consecutive transmembrane segments (helical) span residues Met-85–Ile-105, Val-108–Trp-128, Val-187–Glu-207, Val-217–Cys-237, and Phe-253–Ile-273.

The protein belongs to the UppP family.

Its subcellular location is the cell inner membrane. The catalysed reaction is di-trans,octa-cis-undecaprenyl diphosphate + H2O = di-trans,octa-cis-undecaprenyl phosphate + phosphate + H(+). In terms of biological role, catalyzes the dephosphorylation of undecaprenyl diphosphate (UPP). Confers resistance to bacitracin. This Burkholderia thailandensis (strain ATCC 700388 / DSM 13276 / CCUG 48851 / CIP 106301 / E264) protein is Undecaprenyl-diphosphatase 1.